The following is a 419-amino-acid chain: Putative BTB/POZ domain-containing protein L85 (419 aa).

The 74-residue stretch at 16-89 (TDLTIVLKDD…FYDKTSTNSE (74 aa)) folds into the BTB domain. A disordered region spans residues 250–290 (SSSNDSDEDASETESEHNSETESEHNSETESEHNSETESKH). Over residues 263–290 (ESEHNSETESEHNSETESEHNSETESKH) the composition is skewed to basic and acidic residues.

This sequence belongs to the mimivirus BTB/WD family.

This is Putative BTB/POZ domain-containing protein L85 from Acanthamoeba polyphaga (Amoeba).